We begin with the raw amino-acid sequence, 662 residues long: DNA helicase/primase complex-associated protein (662 aa).

The protein belongs to the herpesviridae HEPA family. Associates with the primase and the helicase to form the helicase-primase complex. Interacts with the origin-binding protein. Interacts with the polymerase catalytic subunit.

The protein resides in the host nucleus. Its function is as follows. Component of the helicase/primase complex. Unwinds the DNA at the replication forks and generates single-stranded DNA for both leading and lagging strand synthesis. The primase synthesizes short RNA primers on the lagging strand that the polymerase presumably elongates using dNTPs. The primase-associated factor has no known catalytic activity in the complex and may serve to facilitate the formation of the replisome by directly interacting with the origin-binding protein and the polymerase. In Human herpesvirus 6A (strain Uganda-1102) (HHV-6 variant A), this protein is DNA helicase/primase complex-associated protein (U74).